Here is a 282-residue protein sequence, read N- to C-terminus: Probable porphobilinogen deaminase (282 aa).

Cys-233 is modified (S-(dipyrrolylmethanemethyl)cysteine).

This sequence belongs to the HMBS family. Dipyrromethane serves as cofactor.

It carries out the reaction 4 porphobilinogen + H2O = hydroxymethylbilane + 4 NH4(+). It participates in porphyrin-containing compound metabolism; protoporphyrin-IX biosynthesis; coproporphyrinogen-III from 5-aminolevulinate: step 2/4. Its function is as follows. Tetrapolymerization of the monopyrrole PBG into the hydroxymethylbilane pre-uroporphyrinogen in several discrete steps. The sequence is that of Probable porphobilinogen deaminase from Picrophilus torridus (strain ATCC 700027 / DSM 9790 / JCM 10055 / NBRC 100828 / KAW 2/3).